Reading from the N-terminus, the 145-residue chain is Cell division protein SepF (145 aa).

The segment covering 23–41 (PQEVSKTKDENAKPKHETP) has biased composition (basic and acidic residues). Positions 23–42 (PQEVSKTKDENAKPKHETPK) are disordered.

The protein belongs to the SepF family. As to quaternary structure, homodimer. Interacts with FtsZ.

The protein resides in the cytoplasm. Cell division protein that is part of the divisome complex and is recruited early to the Z-ring. Probably stimulates Z-ring formation, perhaps through the cross-linking of FtsZ protofilaments. Its function overlaps with FtsA. The sequence is that of Cell division protein SepF from Caldicellulosiruptor bescii (strain ATCC BAA-1888 / DSM 6725 / KCTC 15123 / Z-1320) (Anaerocellum thermophilum).